Reading from the N-terminus, the 533-residue chain is Zona pellucida sperm-binding protein 3 receptor (533 aa).

A signal peptide spans 1-28 (MFPRLQAVSAPALLQITLMAVLLAPVLG). Sushi domains are found at residues 29–88 (DCGP…FCAK), 89–150 (KRCR…ECVI), 151–215 (VKCD…TCEK), 216–275 (VICR…TCEP), 276–342 (NGCI…GCER), 343–408 (VCCP…ACES), and 409–467 (AVCL…KCEW). 14 cysteine pairs are disulfide-bonded: cysteine 30–cysteine 74, cysteine 60–cysteine 86, cysteine 91–cysteine 132, cysteine 118–cysteine 148, cysteine 153–cysteine 196, cysteine 182–cysteine 213, cysteine 218–cysteine 260, cysteine 246–cysteine 273, cysteine 278–cysteine 328, cysteine 312–cysteine 340, cysteine 345–cysteine 393, cysteine 378–cysteine 406, cysteine 411–cysteine 452, and cysteine 438–cysteine 465. Residues asparagine 68 and asparagine 77 are each glycosylated (N-linked (GlcNAc...) asparagine). Residues asparagine 185, asparagine 191, and asparagine 200 are each glycosylated (N-linked (GlcNAc...) asparagine). N-linked (GlcNAc...) asparagine glycans are attached at residues asparagine 433 and asparagine 455.

As to quaternary structure, homooligomer; disulfide-linked. May contain 6-8 monomers per oligomer. The N-terminus may be blocked. Testis. Not expressed in heart, brain, liver or kidney.

It localises to the cytoplasmic vesicle. It is found in the secretory vesicle. Its subcellular location is the acrosome lumen. Its function is as follows. Probably involved in the formation of the dense core and M1 domain of the acrosome. May also regulate the release of certain secretory proteins following the acrosomal reaction. This Cavia porcellus (Guinea pig) protein is Zona pellucida sperm-binding protein 3 receptor (ZP3R).